A 566-amino-acid chain; its full sequence is Beta,beta-carotene 15,15'-dioxygenase (566 aa).

Residues histidine 172, histidine 237, histidine 308, and histidine 514 each contribute to the Fe cation site. The tract at residues 529–566 is disordered; that stretch reads TPAKTQEDENSDHPTGLTAPGLGHGENDFTAGHGGKSL.

The protein belongs to the carotenoid oxygenase family. It depends on Fe(2+) as a cofactor.

It localises to the cytoplasm. The protein localises to the cytosol. The enzyme catalyses all-trans-beta-carotene + O2 = 2 all-trans-retinal. It participates in cofactor metabolism; retinol metabolism. Functionally, symmetrically cleaves beta-carotene into two molecules of retinal using a dioxygenase mechanism. This Rattus norvegicus (Rat) protein is Beta,beta-carotene 15,15'-dioxygenase.